The chain runs to 358 residues: Chorismate synthase (358 aa).

Arg47 is a binding site for NADP(+). Residues 124–126, 240–241, Gly284, 299–303, and Arg325 each bind FMN; these read RSS, NA, and KPIAT.

Belongs to the chorismate synthase family. Homotetramer. The cofactor is FMNH2.

It carries out the reaction 5-O-(1-carboxyvinyl)-3-phosphoshikimate = chorismate + phosphate. Its pathway is metabolic intermediate biosynthesis; chorismate biosynthesis; chorismate from D-erythrose 4-phosphate and phosphoenolpyruvate: step 7/7. Its function is as follows. Catalyzes the anti-1,4-elimination of the C-3 phosphate and the C-6 proR hydrogen from 5-enolpyruvylshikimate-3-phosphate (EPSP) to yield chorismate, which is the branch point compound that serves as the starting substrate for the three terminal pathways of aromatic amino acid biosynthesis. This reaction introduces a second double bond into the aromatic ring system. In Bacteroides thetaiotaomicron (strain ATCC 29148 / DSM 2079 / JCM 5827 / CCUG 10774 / NCTC 10582 / VPI-5482 / E50), this protein is Chorismate synthase.